A 422-amino-acid polypeptide reads, in one-letter code: 3-phosphoshikimate 1-carboxyvinyltransferase (422 aa).

Lys-21, Ser-22, and Arg-26 together coordinate 3-phosphoshikimate. Residue Lys-21 participates in phosphoenolpyruvate binding. Gly-93 and Arg-121 together coordinate phosphoenolpyruvate. 6 residues coordinate 3-phosphoshikimate: Ser-166, Ser-167, Gln-168, Ser-194, Asp-310, and Lys-337. Gln-168 contacts phosphoenolpyruvate. Asp-310 (proton acceptor) is an active-site residue. The phosphoenolpyruvate site is built by Arg-341, Arg-382, and Lys-407.

This sequence belongs to the EPSP synthase family. In terms of assembly, monomer.

The protein resides in the cytoplasm. It carries out the reaction 3-phosphoshikimate + phosphoenolpyruvate = 5-O-(1-carboxyvinyl)-3-phosphoshikimate + phosphate. It functions in the pathway metabolic intermediate biosynthesis; chorismate biosynthesis. Its function is as follows. Catalyzes the transfer of the enolpyruvyl moiety of phosphoenolpyruvate (PEP) to the 5-hydroxyl of shikimate-3-phosphate (S3P) to produce enolpyruvyl shikimate-3-phosphate and inorganic phosphate. In Methanoculleus marisnigri (strain ATCC 35101 / DSM 1498 / JR1), this protein is 3-phosphoshikimate 1-carboxyvinyltransferase.